A 171-amino-acid chain; its full sequence is RNA silencing suppressor p19 (171 aa).

The segment covering 1 to 15 has biased composition (basic and acidic residues); it reads MERAIPGNDTREPAY. Residues 1–32 form a disordered region; that stretch reads MERAIPGNDTREPAYGERWNGGPGGSTSPFQL.

Belongs to the tombusvirus protein p19 family. Homodimer.

Functionally, viral suppressor of RNA silencing which binds specifically to silencing RNAs (siRNAs). Acts as a molecular caliper to specifically select siRNAs based on the length of the duplex region of the RNA. In Capsicum annuum (Capsicum pepper), this protein is RNA silencing suppressor p19.